The primary structure comprises 324 residues: MIRNNWTLEEALELFRMPFSDLILKAHSVHVQNFRNNEVQVAALMNIKTGSCPENCRYCAQSAHYNTGLEKKSLSTVEEVKTAAKRAKEIGADRFCFAAAWRNLHDRDLEKICQFVEAIKSEGLESCASLGMLKLDQAQKLKESGLDFYNHNVDTSREFYHNVVTTRTYEERLETVRNVQQAGIKVCCGGILGMGESTEDRASMLVTLANLEQHPLSVPINRLVPIEGTPMEGNPKIDNIDFVRTIAVARIMMPASYVRLAAGRGEMSEEMQALCMLAGANSIFCGEKLLTTPNARPEDDQRLFSQLGITPSRAACTTSDAQLA.

A Radical SAM core domain is found at asparagine 37–arginine 264. Positions 52, 56, and 59 each coordinate [4Fe-4S] cluster. 4 residues coordinate [2Fe-2S] cluster: cysteine 96, cysteine 127, cysteine 187, and arginine 259.

Belongs to the radical SAM superfamily. Biotin synthase family. As to quaternary structure, homodimer. [4Fe-4S] cluster is required as a cofactor. [2Fe-2S] cluster serves as cofactor.

It carries out the reaction (4R,5S)-dethiobiotin + (sulfur carrier)-SH + 2 reduced [2Fe-2S]-[ferredoxin] + 2 S-adenosyl-L-methionine = (sulfur carrier)-H + biotin + 2 5'-deoxyadenosine + 2 L-methionine + 2 oxidized [2Fe-2S]-[ferredoxin]. It participates in cofactor biosynthesis; biotin biosynthesis; biotin from 7,8-diaminononanoate: step 2/2. Its function is as follows. Catalyzes the conversion of dethiobiotin (DTB) to biotin by the insertion of a sulfur atom into dethiobiotin via a radical-based mechanism. The polypeptide is Biotin synthase (Anaplasma marginale (strain Florida)).